The following is a 267-amino-acid chain: 2-keto-3-deoxy-L-rhamnonate aldolase (267 aa).

The Proton acceptor role is filled by histidine 49. A substrate-binding site is contributed by glutamine 151. Glutamate 153 provides a ligand contact to Mg(2+). Substrate is bound by residues alanine 178 and aspartate 179. Aspartate 179 provides a ligand contact to Mg(2+).

It belongs to the HpcH/HpaI aldolase family. KDR aldolase subfamily. Homohexamer. Mg(2+) is required as a cofactor.

It catalyses the reaction 2-dehydro-3-deoxy-L-rhamnonate = (S)-lactaldehyde + pyruvate. In terms of biological role, catalyzes the reversible retro-aldol cleavage of 2-keto-3-deoxy-L-rhamnonate (KDR) to pyruvate and lactaldehyde. The polypeptide is 2-keto-3-deoxy-L-rhamnonate aldolase (Escherichia coli O17:K52:H18 (strain UMN026 / ExPEC)).